The chain runs to 1013 residues: Dichlorochromopyrrolate synthase (1013 aa).

It belongs to the RebD family. Homodimer. Heme is required as a cofactor.

The catalysed reaction is 2 3-(7-chloroindol-3-yl)-2-iminopropanoate + H2O2 = dichlorochromopyrrolate + NH4(+) + 2 H2O + H(+). It catalyses the reaction 2 2-iminio-3-(indol-3-yl)propanoate + H2O2 = chromopyrrolate + NH4(+) + 2 H2O + H(+). It carries out the reaction 2 H2O2 = O2 + 2 H2O. Involved in the biosynthesis of the indolocarbazole antitumor agent rebeccamycin. Catalyzes the hydrogen peroxide-dependent dimerization of two L-tryptophan-derived molecules (imine form of indole 3-pyruvate (IPA)), to form dichlorochromopyrrolic acid (CPA), the precursor for the six-ring bisindolopyrrolocarbazole scaffold of the rebeccamycin. The hydrogen peroxide is provided together with iminoindolpropanoate by RebO. Due to the instability of indole 3-pyruvate (IPA), which is hydrolyzed in solution and exits in equilibrium with the predominant ketone form of IPA, the concerted functioning of the RebO/RebD system appears to prevent the buildup of significant amounts of IPA and its imine in solution, effectively shepherding the imine further down the biosynthetic chain. In Lentzea aerocolonigenes (Lechevalieria aerocolonigenes), this protein is Dichlorochromopyrrolate synthase (rebD).